Here is a 445-residue protein sequence, read N- to C-terminus: Ribosomal protein uS12 methylthiotransferase RimO (445 aa).

Positions 4–119 (IKVALVSLGC…LLESIKVFLK (116 aa)) constitute an MTTase N-terminal domain. [4Fe-4S] cluster contacts are provided by Cys-13, Cys-48, Cys-82, Cys-156, Cys-160, and Cys-163. One can recognise a Radical SAM core domain in the interval 142–372 (TTPTYTAYVR…MILQQSISKD (231 aa)). One can recognise a TRAM domain in the interval 375 to 441 (KEKIGKIYEV…EYDLIGVVYN (67 aa)).

It belongs to the methylthiotransferase family. RimO subfamily. [4Fe-4S] cluster serves as cofactor.

It is found in the cytoplasm. The catalysed reaction is L-aspartate(89)-[ribosomal protein uS12]-hydrogen + (sulfur carrier)-SH + AH2 + 2 S-adenosyl-L-methionine = 3-methylsulfanyl-L-aspartate(89)-[ribosomal protein uS12]-hydrogen + (sulfur carrier)-H + 5'-deoxyadenosine + L-methionine + A + S-adenosyl-L-homocysteine + 2 H(+). Catalyzes the methylthiolation of an aspartic acid residue of ribosomal protein uS12. The sequence is that of Ribosomal protein uS12 methylthiotransferase RimO from Clostridium botulinum (strain Loch Maree / Type A3).